The primary structure comprises 83 residues: RNA-binding protein Hfq (83 aa).

Residues 11-71 enclose the Sm domain; that stretch reads DVFLNYIRKN…ISTIMPASPV (61 aa).

Belongs to the Hfq family. Homohexamer.

Its function is as follows. RNA chaperone that binds small regulatory RNA (sRNAs) and mRNAs to facilitate mRNA translational regulation in response to envelope stress, environmental stress and changes in metabolite concentrations. Also binds with high specificity to tRNAs. This chain is RNA-binding protein Hfq, found in Rhodospirillum rubrum (strain ATCC 11170 / ATH 1.1.1 / DSM 467 / LMG 4362 / NCIMB 8255 / S1).